Reading from the N-terminus, the 200-residue chain is Lipopolysaccharide core heptose(II)-phosphate phosphatase (200 aa).

A signal peptide spans 1 to 25 (MLAFCRSSLKSKKYFIILLALAAIA).

Belongs to the phosphoglycerate mutase family. Ais subfamily.

The protein localises to the periplasm. It participates in bacterial outer membrane biogenesis; lipopolysaccharide metabolism. In terms of biological role, catalyzes the dephosphorylation of heptose(II) of the outer membrane lipopolysaccharide core. This chain is Lipopolysaccharide core heptose(II)-phosphate phosphatase, found in Escherichia coli O7:K1 (strain IAI39 / ExPEC).